A 619-amino-acid chain; its full sequence is MKRLGHVPIHKGDFHLLPPKVQRFVAEKAELMRPRGIYICDGSQHEADEIIDKLIERGMLSPLKAYENNYICRTDPKDVARVESKTWMVTPDKYQTVCHTPDGIEPIMGHWMSPDSLATELDSRFPGCMAGRIMYVIPFSMGPVGGPLSKIGVQLTDSNYVVLSMRIMTRVGHEVWDALGDNDFVRCIHSVGLPRPVKQRVINHWPCNPERVLIAHRPAEREIWSFGSGYGGNSLLGKKMLALRIASNIAKDEGWMAEHMLIMGVTRPDGKEHFIAAAFPSACGKTNLAMLEPALPGWKVRCVGDDIAWMKFGEDGRLYAINPEYGFFGVAPGTSKKTNPMAVATFQKNSIFTNVGETANGEYFWEGLEDEIKDKNVDMINWLGEKWRIGDPGLCAHPNSRFAAPASQCPIIHPEWESPKGVPIDAIIFGGRRPAGVPLVFETRSWLHGIFTGACLKSEATAAAEHKGKTVMHDPMAMRPFMGYNFGHYLQHWIDLNKDGRKVPKIYHVNWFRRDANNKFLWPGYGQNIRVIDWIVRRLDGEPDIGVDTPIGIVPKKGAINASGLPDIQWDELMSVPKEYWTNDAKEIRKFLEEQVGPDLPKEIRAEMDAQEERINKQA.

Substrate is bound by residues Arg81 and 230 to 232 (YGG). Lys239 and His259 together coordinate Mn(2+). Ser281 provides a ligand contact to substrate. 282-287 (ACGKTN) is a binding site for GTP. Cys283 is an active-site residue. Asp306 contacts Mn(2+). 399–401 (NSR) provides a ligand contact to substrate. GTP-binding positions include Arg401, Arg432, and 525–528 (YGQN).

It belongs to the phosphoenolpyruvate carboxykinase [GTP] family. Monomer. Mn(2+) is required as a cofactor.

The catalysed reaction is oxaloacetate + GTP = phosphoenolpyruvate + GDP + CO2. In parasitic nematodes PEPCK carboxylates phosphoenolpyruvate to oxaloacetate thus introducing the products of glycolysis to mitochondrial metabolism. Functionally, catalyzes the conversion of oxaloacetate (OAA) to phosphoenolpyruvate (PEP), the rate-limiting step in the metabolic pathway that produces glucose from lactate and other precursors derived from the citric acid cycle. The polypeptide is Phosphoenolpyruvate carboxykinase [GTP] (PEPCK) (Haemonchus contortus (Barber pole worm)).